Here is a 150-residue protein sequence, read N- to C-terminus: UPF0756 membrane protein ABAYE1440 (150 aa).

Transmembrane regions (helical) follow at residues 1 to 21 (MLAQ…CGLL), 45 to 65 (FFPY…TIGV), 83 to 103 (FISF…WLGG), and 115 to 135 (VVAG…GVPV).

Belongs to the UPF0756 family.

The protein localises to the cell membrane. The polypeptide is UPF0756 membrane protein ABAYE1440 (Acinetobacter baumannii (strain AYE)).